The primary structure comprises 405 residues: Tryptophan synthase beta chain (405 aa).

Lysine 98 carries the N6-(pyridoxal phosphate)lysine modification.

This sequence belongs to the TrpB family. As to quaternary structure, tetramer of two alpha and two beta chains. Pyridoxal 5'-phosphate is required as a cofactor.

It carries out the reaction (1S,2R)-1-C-(indol-3-yl)glycerol 3-phosphate + L-serine = D-glyceraldehyde 3-phosphate + L-tryptophan + H2O. Its pathway is amino-acid biosynthesis; L-tryptophan biosynthesis; L-tryptophan from chorismate: step 5/5. In terms of biological role, the beta subunit is responsible for the synthesis of L-tryptophan from indole and L-serine. This is Tryptophan synthase beta chain from Xylella fastidiosa (strain M23).